The sequence spans 146 residues: Large ribosomal subunit protein bL9 (146 aa).

This sequence belongs to the bacterial ribosomal protein bL9 family.

Functionally, binds to the 23S rRNA. This is Large ribosomal subunit protein bL9 from Deinococcus geothermalis (strain DSM 11300 / CIP 105573 / AG-3a).